Consider the following 71-residue polypeptide: Defensin-like protein 124 (71 aa).

An N-terminal signal peptide occupies residues 1–25; sequence MSKPTVIVIFMAILVLGMATKETQG. Intrachain disulfides connect Cys-28–Cys-71, Cys-40–Cys-60, Cys-45–Cys-65, and Cys-49–Cys-67.

The protein belongs to the DEFL family.

It is found in the secreted. In Arabidopsis thaliana (Mouse-ear cress), this protein is Defensin-like protein 124 (LCR16).